The chain runs to 124 residues: Apolipoprotein C-IV (124 aa).

A signal peptide spans M1–S27.

It belongs to the apolipoprotein C4 family.

The protein resides in the secreted. Its function is as follows. May participate in lipoprotein metabolism. The chain is Apolipoprotein C-IV (Apoc4) from Rattus norvegicus (Rat).